The chain runs to 383 residues: MEDDDEIQSIPSPGDSSLSPQAPPSPPILPTNDVTVAVVKKPQPGLSSQSPSMNALALVVHTPSVTGGGGSGNRNGRGGGGGSGGGGGGRDDCWSEEATKVLIEAWGDRFSEPGKGTLKQQHWKEVAEIVNKSRQCKYPKTDIQCKNRIDTVKKKYKQEKAKIASGDGPSKWVFFKKLESLIGGTTTFIASSKASEKAPMGGALGNSRSSMFKRQTKGNQIVQQQQEKRGSDSMRWHFRKRSASETESESDPEPEASPEESAESLPPLQPIQPLSFHMPKRLKVDKSGGGGSGVGDVARAILGFTEAYEKAETAKLKLMAELEKERMKFAKEMELQRMQFLKTQLEITQNNQEEEERSRQRGERRIVDDDDDRNGKNNGNVSS.

4 disordered regions span residues 1 to 32 (MEDD…LPTN), 61 to 94 (HTPS…DDCW), 189 to 295 (IASS…SGVG), and 346 to 383 (EITQ…NVSS). The segment covering 66 to 88 (TGGGGSGNRNGRGGGGGSGGGGG) has biased composition (gly residues). Residues 94 to 153 (WSEEATKVLIEAWGDRFSEPGKGTLKQQHWKEVAEIVNKSRQCKYPKTDIQCKNRIDTVK) enclose the Myb-like domain. Over residues 206–225 (NSRSSMFKRQTKGNQIVQQQ) the composition is skewed to polar residues. Residues 226–235 (QEKRGSDSMR) are compositionally biased toward basic and acidic residues. Residues 228–241 (KRGSDSMRWHFRKR) carry the Bipartite nuclear localization signal motif. Over residues 246–262 (TESESDPEPEASPEESA) the composition is skewed to acidic residues. Over residues 263–274 (ESLPPLQPIQPL) the composition is skewed to low complexity. Residues 304-365 (FTEAYEKAET…ERSRQRGERR (62 aa)) are a coiled coil. Basic and acidic residues predominate over residues 356–367 (ERSRQRGERRIV).

The protein resides in the nucleus. Functionally, transcription repressor that binds specific DNA sequence such as the GT-box-like motif 5'-CGTGATT-3' in the AT2S3 promoter. Negative regulator of seed maturation genes during seed germination and seedling development. May target GT-box-containing embryonic genes by competing with the binding of transcriptional activators to this promoter region. Contributes to the maintenance and control of seed filling and may repress the maturation program during early embryogenesis. In Arabidopsis thaliana (Mouse-ear cress), this protein is Trihelix transcription factor ASIL1.